A 125-amino-acid polypeptide reads, in one-letter code: Small ribosomal subunit protein uS13 (125 aa).

Belongs to the universal ribosomal protein uS13 family. As to quaternary structure, part of the 30S ribosomal subunit. Forms a loose heterodimer with protein S19. Forms two bridges to the 50S subunit in the 70S ribosome.

Its function is as follows. Located at the top of the head of the 30S subunit, it contacts several helices of the 16S rRNA. In the 70S ribosome it contacts the 23S rRNA (bridge B1a) and protein L5 of the 50S subunit (bridge B1b), connecting the 2 subunits; these bridges are implicated in subunit movement. Contacts the tRNAs in the A and P-sites. This chain is Small ribosomal subunit protein uS13, found in Rickettsia akari (strain Hartford).